We begin with the raw amino-acid sequence, 307 residues long: MANITAAMVKDLREKTGAGMMDCKSALNETAGDIEAAVDWLRKKGLAKAAKKAGRVAAEGLVAVESAGRHAAVVEVNSETDFVARNDSFQAFVREAAKVALNAEGGVEALEAAHFPGSQTTVKDRLQELIATIGENMTLRRTAKLTVEKGVIATYVHSQVSEGLGKIGVLVALESDGDVGFLSTLGRQIAMHVAATNPLALDATGIDQATIERESNILREKNAGKPDHVLAKIVESGLKSYYKEVTLLEQPFVHDTSKTVSQVLKEAEGKAGGPVKLAGFVRYALGEGIEKEEGPDFASEVAAAAKG.

The tract at residues 80-83 (TDFV) is involved in Mg(2+) ion dislocation from EF-Tu.

This sequence belongs to the EF-Ts family.

Its subcellular location is the cytoplasm. Functionally, associates with the EF-Tu.GDP complex and induces the exchange of GDP to GTP. It remains bound to the aminoacyl-tRNA.EF-Tu.GTP complex up to the GTP hydrolysis stage on the ribosome. The sequence is that of Elongation factor Ts from Methylobacterium nodulans (strain LMG 21967 / CNCM I-2342 / ORS 2060).